Consider the following 273-residue polypeptide: tRNA (guanine-N(7)-)-methyltransferase (273 aa).

The segment at methionine 1–valine 32 is disordered. Residues glycine 88, glutamate 111–isoleucine 112, asparagine 150–cysteine 151, and cysteine 170 contribute to the S-adenosyl-L-methionine site. Aspartate 173 is an active-site residue. Position 248 to 250 (threonine 248 to glutamate 250) interacts with S-adenosyl-L-methionine.

It belongs to the class I-like SAM-binding methyltransferase superfamily. TrmB family. In terms of assembly, forms a complex with trm82.

Its subcellular location is the nucleus. It carries out the reaction guanosine(46) in tRNA + S-adenosyl-L-methionine = N(7)-methylguanosine(46) in tRNA + S-adenosyl-L-homocysteine. It functions in the pathway tRNA modification; N(7)-methylguanine-tRNA biosynthesis. Its function is as follows. Catalyzes the formation of N(7)-methylguanine at position 46 (m7G46) in tRNA. The protein is tRNA (guanine-N(7)-)-methyltransferase (trm8) of Schizosaccharomyces pombe (strain 972 / ATCC 24843) (Fission yeast).